Here is a 448-residue protein sequence, read N- to C-terminus: Probable D-serine dehydratase (448 aa).

An N6-(pyridoxal phosphate)lysine modification is found at K119.

Belongs to the serine/threonine dehydratase family. DsdA subfamily. The cofactor is pyridoxal 5'-phosphate.

The catalysed reaction is D-serine = pyruvate + NH4(+). The sequence is that of Probable D-serine dehydratase from Pseudomonas aeruginosa (strain UCBPP-PA14).